Reading from the N-terminus, the 858-residue chain is Leucine--tRNA ligase (858 aa).

Residues proline 42 to histidine 52 carry the 'HIGH' region motif. A 'KMSKS' region motif is present at residues lysine 618–serine 622. Residue lysine 621 participates in ATP binding.

The protein belongs to the class-I aminoacyl-tRNA synthetase family.

Its subcellular location is the cytoplasm. It carries out the reaction tRNA(Leu) + L-leucine + ATP = L-leucyl-tRNA(Leu) + AMP + diphosphate. The polypeptide is Leucine--tRNA ligase (Vibrio atlanticus (strain LGP32) (Vibrio splendidus (strain Mel32))).